The primary structure comprises 549 residues: MNQGHPQPDMYYSPHYSTPQYGYGYSTNGAPTTAVSTPMPAPQNVLPVPSALSNQGAMQQPGYSNSSNNGAFDTTGQHNPPGMKPRVTATLWEDEGSLCFQVEARGICVARREDNHMINGTKLLNVAGMTRGRRDGILKSEKVRHVVKIGPMHLKGVWIPYDRALDFANKEKITELLFPLFVHNIGALLYHPSNSNRTSQVMAAAERRKHEGLGGQRPPAPNALPSIGQHHPMMPGLPTGGYVPQSLANGPQSLASTPQPLANGSQPPMPNGGGMLKRGREEEEDLHRPVSNGHDPMSNMHAMSNGYPQQPPLANVHQPPMQNGGDMLKRGREEDDEVHRSAHNAHDTMNNMPGSMPGMSNAYAQPLPNVHHQPLANGDGGMLKRGRDEDDDHRSSPNGHDSAGNFEAKRRKTITSNDSMVSPGGFYTLHNGYGQPGVMNGMSPYKRRDDEAETPRPGPNVHDHLNNFDLKRHKTMETSVPAPQYDAMNRPHSSIGTSPSYAPAPVYDNLARPASTVAASPSYPSAPVYDTAARPPSAISAPRRQQSFG.

The 107-residue stretch at 86–192 (RVTATLWEDE…HNIGALLYHP (107 aa)) folds into the HTH APSES-type domain. The segment at residues 120 to 141 (GTKLLNVAGMTRGRRDGILKSE) is a DNA-binding region (H-T-H motif). Disordered regions lie at residues 205–227 (AERR…LPSI), 246–288 (SLAN…DLHR), 332–466 (REED…DHLN), and 514–549 (ASTV…QSFG). Residues 246–266 (SLANGPQSLASTPQPLANGSQ) show a composition bias toward polar residues. Basic and acidic residues-rich tracts occupy residues 278–288 (RGREEEEDLHR), 332–346 (REED…HNAH), and 385–395 (RGRDEDDDHRS). Positions 516–545 (TVAASPSYPSAPVYDTAARPPSAISAPRRQ) are nuclear localization domain. The span at 532 to 549 (AARPPSAISAPRRQQSFG) shows a compositional bias: low complexity.

Belongs to the EFG1/PHD1/stuA family.

Its subcellular location is the nucleus. Functionally, transcription factor that regulates asexual reproduction. Binds the StuA-response elements (StRE) with the consensus sequence 5'-(A/T)CGCG(T/A)N(A/C)-3' at the promoters of target genes. The sequence is that of Cell pattern formation-associated protein StuA from Gibberella moniliformis (strain M3125 / FGSC 7600) (Maize ear and stalk rot fungus).